Consider the following 338-residue polypeptide: Glycerol-3-phosphate dehydrogenase [NAD(P)+] (338 aa).

Positions 14, 15, 35, and 109 each coordinate NADPH. K109, G138, and T140 together coordinate sn-glycerol 3-phosphate. Residue A142 coordinates NADPH. Residues K194, D247, S257, R258, and N259 each contribute to the sn-glycerol 3-phosphate site. K194 functions as the Proton acceptor in the catalytic mechanism. R258 provides a ligand contact to NADPH. NADPH-binding residues include V282 and E284.

It belongs to the NAD-dependent glycerol-3-phosphate dehydrogenase family.

Its subcellular location is the cytoplasm. It carries out the reaction sn-glycerol 3-phosphate + NAD(+) = dihydroxyacetone phosphate + NADH + H(+). The catalysed reaction is sn-glycerol 3-phosphate + NADP(+) = dihydroxyacetone phosphate + NADPH + H(+). Its pathway is membrane lipid metabolism; glycerophospholipid metabolism. In terms of biological role, catalyzes the reduction of the glycolytic intermediate dihydroxyacetone phosphate (DHAP) to sn-glycerol 3-phosphate (G3P), the key precursor for phospholipid synthesis. This Shewanella baltica (strain OS195) protein is Glycerol-3-phosphate dehydrogenase [NAD(P)+].